Here is a 102-residue protein sequence, read N- to C-terminus: Small ribosomal subunit protein uS10 (102 aa).

It belongs to the universal ribosomal protein uS10 family. In terms of assembly, part of the 30S ribosomal subunit.

Its function is as follows. Involved in the binding of tRNA to the ribosomes. In Acidiphilium cryptum (strain JF-5), this protein is Small ribosomal subunit protein uS10.